Reading from the N-terminus, the 314-residue chain is uncharacterized protein (314 aa).

Disordered stretches follow at residues 170 to 203 (RSSM…NPDE) and 258 to 314 (VGES…PKKR). Over residues 171–186 (SSMNSQSQMSESSFPT) the composition is skewed to low complexity. The span at 187-200 (PIDPPPRIPHPPLN) shows a compositional bias: pro residues. A compositionally biased stretch (polar residues) spans 261-272 (SSRQGENTQNVH). Residues 289 to 303 (RFKDDARKSNEDEHM) show a composition bias toward basic and acidic residues.

This is an uncharacterized protein from Arabidopsis thaliana (Mouse-ear cress).